The primary structure comprises 182 residues: Mesencephalic astrocyte-derived neurotrophic factor (182 aa).

The first 24 residues, 1–24 (MRRMWATQGLAVALALSVLPGSRA), serve as a signal peptide directing secretion. Disulfide bonds link Cys30/Cys117, Cys33/Cys106, Cys64/Cys75, and Cys151/Cys154. At Tyr76 the chain carries Phosphotyrosine. Positions 96–158 (LAHHIPVEKI…ETCKGCAEKS (63 aa)) are interacts with ERN1, EIF2AK3 and ATF6. The segment at 129 to 172 (TVDLKKLRVKELKKILDDWGETCKGCAEKSDYIRKINELMPKYA) is interacts with HSPA5.

The protein belongs to the ARMET family. Interacts directly (via SAP domain) with HSPA5/BiP; the interaction inhibits ATP binding to HSPA5/BiP and subsequent nucleotide exchange. Component of a complex containing at least CRELD2, MANF, MATN3 and PDIA4. Interacts (via C-terminus) with ERN1 (via luminal domain); the interaction is decreased in the presence of increasing concentrations of Ca(2+). May contain sialic acid residues.

It is found in the secreted. It localises to the endoplasmic reticulum lumen. The protein resides in the sarcoplasmic reticulum lumen. In terms of biological role, selectively promotes the survival of dopaminergic neurons of the ventral mid-brain. Modulates GABAergic transmission to the dopaminergic neurons of the substantia nigra. Enhances spontaneous, as well as evoked, GABAergic inhibitory postsynaptic currents in dopaminergic neurons. Inhibits cell proliferation and endoplasmic reticulum (ER) stress-induced cell death. Retained in the ER/sarcoplasmic reticulum (SR) through association with the endoplasmic reticulum chaperone protein HSPA5 under normal conditions. Stabilizes HSPA5/BiP in its substrate-bound ADP state, which facilitates HSPA5/BiP incorporation into chaperone-client complexes during endoplasmic reticulum stress, its interaction with HSPA5/BiP inhibits ATP binding to HSPA5/BiP and subsequent nucleotide exchange. As a result acts as a repressor of the unfolded protein response (UPR) pathway. Up-regulated and secreted by the ER/SR in response to ER stress and hypoxia. Following secretion by the ER/SR, directly binds to 3-O-sulfogalactosylceramide, a lipid sulfatide in the outer cell membrane of target cells. Sulfatide binding promotes its cellular uptake by endocytosis, and is required for its role in alleviating ER stress and cell toxicity under hypoxic and ER stress conditions. Essential for embryonic lung development. Required for the correct postnatal temporal and structural development of splenic white pulp. Required for the repair-associated myeloid response in skeletal muscle, acts as a regulator of phenotypic transition towards prorepair macrophages in response to muscle injury and as a result limits excessive proinflammatory signaling. Represses RELA expression and therefore NF-kB signaling in the myocardium, as a result limits macrophage infiltration of injured tissue and M1 macrophage differentiation in response to myocardial injury. Required for endochondral ossification in long bones and the skull during postnatal development. The sequence is that of Mesencephalic astrocyte-derived neurotrophic factor from Homo sapiens (Human).